A 325-amino-acid chain; its full sequence is E3 ubiquitin-protein ligase EL5 (325 aa).

Residues 1-29 (MVRGVEQGGPAMDESSSSSSPSPVSAPAG) are disordered. Positions 15-28 (SSSSSSPSPVSAPA) are enriched in low complexity. A helical transmembrane segment spans residues 38 to 58 (IATVAAVLIVFAALTLAFVLL). The segment at 70–105 (TTTSTSGRGRRPRPRRRSGSGGDGGTGGGVDPEVLR) is disordered. Residues 77 to 87 (RGRRPRPRRRS) are compositionally biased toward basic residues. Positions 88–99 (GSGGDGGTGGGV) are enriched in gly residues. An RING-type; atypical zinc finger spans residues 134-176 (CAVCLAELEDGEEARFLPRCGHGFHAECVDMWLGSHSTCPLCR). 2 disordered regions span residues 267 to 289 (GAAGSTSSCSCATGGDNDDGDVE) and 303 to 325 (AATPARPPEAEAGARTAAAHVRN). Low complexity predominate over residues 268 to 281 (AAGSTSSCSCATGG).

The protein resides in the cell membrane. It catalyses the reaction S-ubiquitinyl-[E2 ubiquitin-conjugating enzyme]-L-cysteine + [acceptor protein]-L-lysine = [E2 ubiquitin-conjugating enzyme]-L-cysteine + N(6)-ubiquitinyl-[acceptor protein]-L-lysine.. It functions in the pathway protein modification; protein ubiquitination. Its function is as follows. Functions as an E3 ubiquitin-protein ligase in cooperation with the E2 ubiquitin conjugating enzymes UBC5A and UBC5B. Involved in root development. Required for the maintenance of cell viability after the initiation of root primordial formation. May mediate the degradation of cytotoxic proteins produced in root cells after the actions of auxin, cytokinin and jasmonic acid. Mediates 'Lys-48'-linked polyubiquitination of MBP in vitro. This chain is E3 ubiquitin-protein ligase EL5 (EL5.1), found in Oryza sativa subsp. japonica (Rice).